The chain runs to 92 residues: Nodulation protein F (92 aa).

The Carrier domain maps to 4–88 (QLTVEIIAAI…DVVEAVRGLI (85 aa)). Serine 45 is subject to O-(pantetheine 4'-phosphoryl)serine.

4'-phosphopantetheine is transferred from CoA to a specific serine of apo-NodF.

Its function is as follows. Proposed to synthesize nod factor fatty acyl chain. Involved in trans-2,trans-4,trans-6,cis-11-octadecatetraenoic acid biosynthesis. The chain is Nodulation protein F (nodF) from Rhizobium leguminosarum bv. trifolii.